Reading from the N-terminus, the 722-residue chain is MSPVEITGADAVVTPPMRGRVPLPPPPPPPMRRSAPSPPPMSGRVPPPPPPPPMFDPKGAGRVICCLRPGQNKSSLKRFQCGKLTNAWEELQRHGEAQTAPEFDLSEIEALFSAAVQNQADKSGSRREAFEANPDKLQLISGADALVPLPPPPPPMPRRSPPPPPPRFDAFDHKGARMVCGFRCPVTKRSSLKPLHWVKITRALQGSLWDELQIQYGESQTAIELDVPEIETLFSVGAKPRPKPKPEKVPLIDLKRANNTIVNLKILKMPLPDMMAAVMAMDESVLDVDQIENLIQLCPTKEEMELLKNYTGDKATLGKSEQCLLELMKVPRFEAKLRVLSFKIPFGTKITKFRKMLNVVNSACEEVRSSQMLKEIMKIILFLGNTLNQGTARGSAVGFRLDSLLILSETRADNNKMTLMHYLCKVLASKAADLLDFHKDLQSLESTLEINLKSLAEEIHAITKGLEKLKQELTASETDGPVSQVFRKLLKDFISSAETQVATVSTLYSSARINADALAHYFGEDPNHYPFEKVSATLLSFIRLFKKAHQENVKQEDLEKKKAATEDVFGGPDHNIDSDTSLDDSEAKSPSRIRPPPSIPRPPSRPRYACCRIPAVNPPPRLVCGPYPLPRLVRVGSPSPPPPSMSGGAPPPPPPPPMLVASRTAPPPHLSHVRSIPFQTRLVMGTSPLPLLVREGAPPPTLPSMSGGAPPPPPPLPMLRYQ.

4 disordered regions span residues 1-56 (MSPV…PMFD), 564-606 (ATED…PSRP), 635-672 (VGSPSPPPPSMSGGAPPPPPPPPMLVASRTAPPPHLSH), and 690-722 (PLLVREGAPPPTLPSMSGGAPPPPPPLPMLRYQ). Positions 22–55 (PLPPPPPPPMRRSAPSPPPMSGRVPPPPPPPPMF) are enriched in pro residues. Residues 182–571 (FRCPVTKRSS…KAATEDVFGG (390 aa)) form the FH2 domain. Composition is skewed to pro residues over residues 593-605 (IRPPPSIPRPPSR), 638-658 (PSPPPPSMSGGAPPPPPPPPM), and 709-722 (APPPPPPLPMLRYQ).

The protein belongs to the formin-like family. Class-II subfamily.

The sequence is that of Formin-like protein 16 (FH16) from Arabidopsis thaliana (Mouse-ear cress).